Consider the following 1258-residue polypeptide: Plasma membrane calcium-transporting ATPase 3 (1258 aa).

Residues Met1 to Arg19 show a composition bias toward polar residues. A disordered region spans residues Met1 to Pro22. At Met1–Thr97 the chain is on the cytoplasmic side. Ser8 is subject to Phosphoserine. A helical transmembrane segment spans residues Phe98–Ala118. At Ile119 to Ile155 the chain is on the extracellular side. The helical transmembrane segment at Glu156–Trp176 threads the bilayer. The Cytoplasmic segment spans residues Ser177–Leu364. Disordered regions lie at residues Glu298 to Ala328 and Lys335 to Lys354. 2 stretches are compositionally biased toward basic and acidic residues: residues Glu299 to Gln308 and Met342 to Lys354. Residues Thr365–Ile384 form a helical membrane-spanning segment. The Extracellular portion of the chain corresponds to Ile385–Phe417. The chain crosses the membrane as a helical span at residues Phe418 to Leu435. Residues Ala436–Ile849 are Cytoplasmic-facing. Asp473 acts as the 4-aspartylphosphate intermediate in catalysis. The Mg(2+) site is built by Asp794 and Asp798. A helical membrane pass occupies residues Ser850 to Thr869. Over Gly870 to Leu879 the chain is Extracellular. The helical transmembrane segment at Lys880–Ala900 threads the bilayer. The Cytoplasmic segment spans residues Thr901 to Leu920. A helical transmembrane segment spans residues Ile921–Leu943. Residues Leu944–Leu961 are Extracellular-facing. A helical membrane pass occupies residues His962–Asn983. Topologically, residues Glu984–Ser1002 are cytoplasmic. The chain crosses the membrane as a helical span at residues Asn1003 to Gly1024. At Gly1025–Ser1034 the chain is on the extracellular side. A helical membrane pass occupies residues Thr1035 to Ala1056. The Cytoplasmic portion of the chain corresponds to Thr1057 to Leu1258. A Phosphothreonine modification is found at Thr1079. A calmodulin-binding subdomain A region spans residues Leu1097–Gln1114. Thr1113 bears the Phosphothreonine; by PKC mark. The interval Met1115–Ser1124 is calmodulin-binding subdomain B. Ser1126 is modified (phosphoserine). A disordered region spans residues Glu1204–Leu1258. Over residues Thr1231–Ser1245 the composition is skewed to low complexity.

The protein belongs to the cation transport ATPase (P-type) (TC 3.A.3) family. Type IIB subfamily. As to quaternary structure, interacts with PDZD11. Interacts (via N-terminus) with YWHAE. In terms of tissue distribution, expressed predominantly in brain and skeletal muscle. Expressed in the molecular layer of the cerebellar cortex, in particular in granule cells (at protein level). Expressed in aldosterone producing glomerulosa cells of adrenal glands (at protein level). Detected at low levels in various tissues including testis, stomach, small intestine, and large intestine. Most abundant form in brain and most other tissues. As to expression, most abundant form in skeletal muscle and is also found in brain and at low levels in testis and kidney.

Its subcellular location is the cell membrane. It localises to the presynaptic cell membrane. The catalysed reaction is Ca(2+)(in) + ATP + H2O = Ca(2+)(out) + ADP + phosphate + H(+). Its function is as follows. ATP-driven Ca(2+) ion pump involved in the maintenance of basal intracellular Ca(2+) levels at the presynaptic terminals. Uses ATP as an energy source to transport cytosolic Ca(2+) ions across the plasma membrane to the extracellular compartment. May counter-transport protons, but the mechanism and the stoichiometry of this Ca(2+)/H(+) exchange remains to be established. The sequence is that of Plasma membrane calcium-transporting ATPase 3 (Atp2b3) from Rattus norvegicus (Rat).